We begin with the raw amino-acid sequence, 394 residues long: Acetate kinase (394 aa).

Position 7 (Asn7) interacts with Mg(2+). Residue Lys14 coordinates ATP. Position 90 (Arg90) interacts with substrate. The active-site Proton donor/acceptor is Asp147. ATP is bound by residues 204–208 (HLGNG), 278–280 (DLR), and 326–330 (GIGEN). Mg(2+) is bound at residue Glu380.

The protein belongs to the acetokinase family. In terms of assembly, homodimer. It depends on Mg(2+) as a cofactor. The cofactor is Mn(2+).

It is found in the cytoplasm. The catalysed reaction is acetate + ATP = acetyl phosphate + ADP. It participates in metabolic intermediate biosynthesis; acetyl-CoA biosynthesis; acetyl-CoA from acetate: step 1/2. Functionally, catalyzes the formation of acetyl phosphate from acetate and ATP. Can also catalyze the reverse reaction. The chain is Acetate kinase from Flavobacterium johnsoniae (strain ATCC 17061 / DSM 2064 / JCM 8514 / BCRC 14874 / CCUG 350202 / NBRC 14942 / NCIMB 11054 / UW101) (Cytophaga johnsonae).